The primary structure comprises 826 residues: MTSKKTTPMMKQWHQCKEKAGESLLLFRMGDFYEAFYDDAIVLSQNLDITLTQRQGIPMSGIPVSTINGYIDRLVSKGFKVAVAEQLDEAQDNKGKSEPLSRELQRFITPGTLLSSSLLPEKANNYIVSINRVGALFGLACLDFSTGSFLLQEYDNMKDLVDEICRLAPTEILSCDKFYKKHADIIEQIQQHLKLTLSTYADWAFEHQFATQKLSLHFHVSSLDGFGLKGLVPAINSAGALLSYLQDKLLLPVEHISIPKTQGNQKHLLIDTASQVNLELLTPIHDPQGKSSLLHVMERTSTPMGGRLLRNTLVNPFYDQKEILLRQDAVEFLLDRSELRKNLKSLLSQVRDLERLTTKITTSLAGPKDIGMLRDSLNASIRVCEVLSPLPLPKFFQGRFTLPIGLTSLSELLSRALLGELPLRISEGNIFCDNHHPDLQRLRYTKEHSKEWLWQYQETIRQQTGVKKLKVCYSQALGYYIEVSSDFAPLLPKEFIRRQSRLHAERFTTEKLQEFQDDMLNISDKLQTLETQLFKDLCAQILQQREEILSLSQVIADIDYILSLSDLAAEYNYCRPIVDTSDSLSISGGIHPVAQTLLDKGTFIPNDIKMHSTRTRMILITGPNMAGKSTYIRQIALLVIMAQMGSFIPAKSAHIGMIDKIFTRIGAGDNLSKGMSTFMVEMAETANILHNATDRSLVILDEVGRGTSTYDGLAIAQSVVEYLLFTEGKKAKTLFATHYKELTDLENHCPHVENFHASVKENGGQPVFLYEILKGHSQKSFGIHVAKLAGFPLCVISRAQQILRQLEGPEATSKQPQEKELQLTLF.

622 to 629 provides a ligand contact to ATP; that stretch reads GPNMAGKS.

Belongs to the DNA mismatch repair MutS family.

This protein is involved in the repair of mismatches in DNA. It is possible that it carries out the mismatch recognition step. This protein has a weak ATPase activity. This chain is DNA mismatch repair protein MutS, found in Chlamydia abortus (strain DSM 27085 / S26/3) (Chlamydophila abortus).